The following is a 398-amino-acid chain: ATP-dependent RNA helicase eIF4A (398 aa).

The Q motif signature appears at 25-53 (DSFDTMNLKPELLRGVYAYGFERPSAIQQ). The Helicase ATP-binding domain maps to 56–226 (IMPVIKGHDV…TKFMRDPVRI (171 aa)). An ATP-binding site is contributed by 69–76 (AQSGTGKT). Residues 174-177 (DEAD) carry the DEAD box motif. Positions 237–398 (GIKQFYIAVE…EMPMNVADLI (162 aa)) constitute a Helicase C-terminal domain.

This sequence belongs to the DEAD box helicase family. eIF4A subfamily. As to quaternary structure, component of the eIF4F complex, which composition varies with external and internal environmental conditions. It is composed of at least eIF4A, eIF4E and eIF4G.

Its subcellular location is the cytoplasm. It carries out the reaction ATP + H2O = ADP + phosphate + H(+). In terms of biological role, ATP-dependent RNA helicase which is a subunit of the eIF4F complex involved in cap recognition and is required for mRNA binding to ribosome. In the current model of translation initiation, eIF4A unwinds RNA secondary structures in the 5'-UTR of mRNAs which is necessary to allow efficient binding of the small ribosomal subunit, and subsequent scanning for the initiator codon. This Sclerotinia sclerotiorum (strain ATCC 18683 / 1980 / Ss-1) (White mold) protein is ATP-dependent RNA helicase eIF4A (tif1).